Consider the following 304-residue polypeptide: Undecaprenyl-diphosphatase (304 aa).

8 helical membrane passes run 5-25, 47-67, 72-92, 111-131, 137-157, 209-231, 248-268, and 282-302; these read FLFILKALIIAIVEGLTEFVP, GFPEMYEVVIQLGAILAVVVL, ISSSVVEFLSYIFSFIGLKAS, FGINVIIGTIPAAILGLLFHD, LFSTKTVAIGFIVGGILLIVI, ISGLSTTVATEFTFFLAIPAMVG, TNLISLILGFIVAFIVSLVVI, and IFAIYRVFAGIVLAILIFTKV.

It belongs to the UppP family.

The protein resides in the cell membrane. It carries out the reaction di-trans,octa-cis-undecaprenyl diphosphate + H2O = di-trans,octa-cis-undecaprenyl phosphate + phosphate + H(+). Catalyzes the dephosphorylation of undecaprenyl diphosphate (UPP). Confers resistance to bacitracin. This chain is Undecaprenyl-diphosphatase, found in Clostridium perfringens (strain SM101 / Type A).